A 262-amino-acid polypeptide reads, in one-letter code: MPQNEYIEAHIKKHGRRLDHDERKRKREAREGHRISKDAQNLTGFRAKMFAKKRYAEKVAMKKKIREHEQSKVNGTPKEHNPEDGDALPTYLLDRQQPNSAKALSSSIKQKRLEKADKFSVPLPKVRGISEEEMFKVLKSGKRRNKSWKRMITKHTFVGEGFTRRPVKLERIIRPSALRQKKANVTHPELGVTVHLPILGVKKNPQSPMYTQLGVLTRGTIIEVNVSELGLVTAGGKVVWGKYAQITNEPDRDGCVNAVLLV.

A disordered region spans residues 1–39; it reads MPQNEYIEAHIKKHGRRLDHDERKRKREAREGHRISKDA. Short sequence motifs (nuclear localization signal) lie at residues 11-18 and 51-58; these read IKKHGRRL and AKKRYAEK. Residues 18–37 are compositionally biased toward basic and acidic residues; it reads LDHDERKRKREAREGHRISK. The span at 61 to 83 shows a compositional bias: basic and acidic residues; that stretch reads MKKKIREHEQSKVNGTPKEHNPE. The disordered stretch occupies residues 61 to 86; sequence MKKKIREHEQSKVNGTPKEHNPEDGD.

Belongs to the eukaryotic ribosomal protein eS8 family. Ribosome biogenesis protein NSA2 subfamily. Component of the pre-66S ribosomal particle. Interacts with NOP7 and RRP1. Interacts with RSA4 (via WD repeats).

The protein resides in the nucleus. It is found in the nucleolus. Involved in the biogenesis of the 60S ribosomal subunit. May play a part in the quality control of pre-60S particles. This is Ribosome biogenesis protein NSA2 (NSA2) from Yarrowia lipolytica (strain CLIB 122 / E 150) (Yeast).